The chain runs to 186 residues: ADP-ribosylation factor-like protein 8A (186 aa).

The segment at residues 1 to 19 (MIALFNKLLDWFKALFWKE) is an intramembrane region (note=Mediates targeting to membranes). Residues 29–35 (QYSGKTT), 71–75 (DIGGQ), and 130–133 (NKRD) each bind GTP.

This sequence belongs to the small GTPase superfamily. Arf family. Interacts with PLEKHM1. When GTP-bound, interacts with RUFY3 and RUFY4, but not with RUFY1, nor RUFY2.

It is found in the late endosome membrane. The protein resides in the lysosome membrane. The protein localises to the cytoplasm. It localises to the cytoskeleton. Its subcellular location is the spindle. It is found in the cell projection. The protein resides in the axon. The protein localises to the synapse. Its function is as follows. Plays a role in lysosomes motility. In neurons, mediates the anterograde axonal long-range transport of presynaptic lysosome-related vesicles required for presynaptic biogenesis and synaptic function. May play a role in chromosome segregation. This is ADP-ribosylation factor-like protein 8A (Arl8a) from Mus musculus (Mouse).